Reading from the N-terminus, the 347-residue chain is NADH-ubiquinone oxidoreductase chain 2 (347 aa).

Transmembrane regions (helical) follow at residues 3 to 23 (PMTF…VMMS), 59 to 79 (YFLT…INLL), 89 to 109 (LINP…LGLA), 150 to 170 (NLNI…WGGL), 178 to 198 (IMAY…MYNP), 201 to 221 (MLLN…LLMI), 237 to 257 (LPLI…LPPL), 276 to 296 (IILS…YTRI), and 326 to 346 (LPLM…TAIL).

Belongs to the complex I subunit 2 family. Core subunit of respiratory chain NADH dehydrogenase (Complex I) which is composed of 45 different subunits. Interacts with TMEM242.

The protein resides in the mitochondrion inner membrane. The enzyme catalyses a ubiquinone + NADH + 5 H(+)(in) = a ubiquinol + NAD(+) + 4 H(+)(out). In terms of biological role, core subunit of the mitochondrial membrane respiratory chain NADH dehydrogenase (Complex I) which catalyzes electron transfer from NADH through the respiratory chain, using ubiquinone as an electron acceptor. Essential for the catalytic activity and assembly of complex I. This chain is NADH-ubiquinone oxidoreductase chain 2, found in Nyctophilus arnhemensis (Northern long-eared bat).